The following is a 236-amino-acid chain: Cutinase (236 aa).

The first 20 residues, 1-20 (MSLTLFSFLSLVSILCIVTA), serve as a signal peptide directing secretion. Cysteines 66 and 143 form a disulfide. The active-site Nucleophile is the S154. Residues C202 and C209 are joined by a disulfide bond. Residue D206 is part of the active site. Catalysis depends on H218, which acts as the Proton donor/acceptor.

This sequence belongs to the cutinase family. In terms of processing, the 2 disulfide bonds play a critical role in holding the catalytic residues in juxta-position; reduction of the disulfide bridges results in the complete inactivation of the enzyme.

It localises to the secreted. It catalyses the reaction cutin + H2O = cutin monomers.. Functionally, catalyzes the hydrolysis of complex carboxylic polyesters found in the cell wall of plants. Degrades cutin, a macromolecule that forms the structure of the plant cuticle. Allows pathogenic fungi to penetrate through the cuticular barrier into the host plant during the initial stage of fungal infection. This is Cutinase (CUT1) from Blumeria hordei (Barley powdery mildew).